Consider the following 220-residue polypeptide: Inner membrane-spanning protein YciB (220 aa).

Transmembrane regions (helical) follow at residues 20–40, 57–77, 86–106, 123–143, 156–176, and 187–207; these read EVPP…FFFA, IGAP…IALA, LPIM…LTLW, LFGG…GYVF, KLTL…EIVW, and FKVW…MPLI.

Belongs to the YciB family.

It localises to the cell inner membrane. In terms of biological role, plays a role in cell envelope biogenesis, maintenance of cell envelope integrity and membrane homeostasis. The protein is Inner membrane-spanning protein YciB of Brucella abortus (strain S19).